Here is a 198-residue protein sequence, read N- to C-terminus: NAD(P)H quinone oxidoreductase PST1 (198 aa).

A Flavodoxin-like domain is found at 6–192 (VAIIIYSLYH…AIAKQQGEDF (187 aa)). Residues 12–16 (SLYHH) and 112–164 (VFVW…SPWG) each bind FMN.

It belongs to the WrbA family. Requires FMN as cofactor.

The protein resides in the cell membrane. It catalyses the reaction a quinone + NADH + H(+) = a quinol + NAD(+). It carries out the reaction a quinone + NADPH + H(+) = a quinol + NADP(+). Flavodoxin-like protein (FLP) that plays a role in cell wall integrity, oxidative stress protection and virulence. FLPs act as NAD(P)H quinone oxidoreductases. Reduces ubiquinone (coenzyme Q), enabling it to serve as an antioxidant in the membrane. This is NAD(P)H quinone oxidoreductase PST1 from Candida albicans (strain SC5314 / ATCC MYA-2876) (Yeast).